The chain runs to 45 residues: Osteocalcin 1 (45 aa).

Residues 1 to 41 (AAGQLSLTQLESLREVCELNLACEHMMDTEGIIAAYTAYYG) form the Gla domain. The Ca(2+) site is built by glutamate 11, glutamate 15, glutamate 18, and glutamate 24. 3 positions are modified to 4-carboxyglutamate: glutamate 11, glutamate 15, and glutamate 18. A disulfide bridge links cysteine 17 with cysteine 23.

Belongs to the osteocalcin/matrix Gla protein family. Post-translationally, gamma-carboxyglutamate residues are formed by vitamin K dependent carboxylation by GGCX. These residues are essential for the binding of calcium.

Its subcellular location is the secreted. The carboxylated form is one of the main organic components of the bone matrix, which constitutes 1-2% of the total bone protein. The carboxylated form binds strongly to apatite and calcium. In Diplodus sargus (White seabream), this protein is Osteocalcin 1.